A 286-amino-acid polypeptide reads, in one-letter code: Bifunctional protein FolD (286 aa).

Residues 166–168 and isoleucine 232 each bind NADP(+); that span reads GAS.

The protein belongs to the tetrahydrofolate dehydrogenase/cyclohydrolase family. In terms of assembly, homodimer.

It carries out the reaction (6R)-5,10-methylene-5,6,7,8-tetrahydrofolate + NADP(+) = (6R)-5,10-methenyltetrahydrofolate + NADPH. The enzyme catalyses (6R)-5,10-methenyltetrahydrofolate + H2O = (6R)-10-formyltetrahydrofolate + H(+). It participates in one-carbon metabolism; tetrahydrofolate interconversion. In terms of biological role, catalyzes the oxidation of 5,10-methylenetetrahydrofolate to 5,10-methenyltetrahydrofolate and then the hydrolysis of 5,10-methenyltetrahydrofolate to 10-formyltetrahydrofolate. The sequence is that of Bifunctional protein FolD from Shewanella denitrificans (strain OS217 / ATCC BAA-1090 / DSM 15013).